We begin with the raw amino-acid sequence, 284 residues long: 2,3,4,5-tetrahydropyridine-2,6-dicarboxylate N-succinyltransferase (284 aa).

The substrate site is built by Arg111 and Asp148.

This sequence belongs to the transferase hexapeptide repeat family. Homotrimer.

Its subcellular location is the cytoplasm. It carries out the reaction (S)-2,3,4,5-tetrahydrodipicolinate + succinyl-CoA + H2O = (S)-2-succinylamino-6-oxoheptanedioate + CoA. It functions in the pathway amino-acid biosynthesis; L-lysine biosynthesis via DAP pathway; LL-2,6-diaminopimelate from (S)-tetrahydrodipicolinate (succinylase route): step 1/3. The chain is 2,3,4,5-tetrahydropyridine-2,6-dicarboxylate N-succinyltransferase from Brucella anthropi (strain ATCC 49188 / DSM 6882 / CCUG 24695 / JCM 21032 / LMG 3331 / NBRC 15819 / NCTC 12168 / Alc 37) (Ochrobactrum anthropi).